Consider the following 274-residue polypeptide: Energy-coupling factor transporter ATP-binding protein EcfA1 (274 aa).

An ABC transporter domain is found at 10–241; sequence ASFQGVYFSY…AAELQKIRLD (232 aa). ATP is bound at residue 42–49; sequence GHNGSGKS.

The protein belongs to the ABC transporter superfamily. Energy-coupling factor EcfA family. Forms a stable energy-coupling factor (ECF) transporter complex composed of 2 membrane-embedded substrate-binding proteins (S component), 2 ATP-binding proteins (A component) and 2 transmembrane proteins (T component).

It localises to the cell membrane. Its function is as follows. ATP-binding (A) component of a common energy-coupling factor (ECF) ABC-transporter complex. Unlike classic ABC transporters this ECF transporter provides the energy necessary to transport a number of different substrates. The chain is Energy-coupling factor transporter ATP-binding protein EcfA1 from Mycoplasma pneumoniae (strain ATCC 29342 / M129 / Subtype 1) (Mycoplasmoides pneumoniae).